Here is a 183-residue protein sequence, read N- to C-terminus: Seminal plasma protein BSP-30 kDa (183 aa).

The signal sequence occupies residues 1–25 (MAPLVGLFLIWAGASVFQQLHPVNG). Residues 23-47 (VNGGDIPDPGSKPTPPGMADELPTE) form a disordered region. Residues Thr-36, Thr-46, Thr-57, Thr-58, Thr-59, and Thr-64 are each glycosylated (O-linked (GalNAc...) threonine). Fibronectin type-II domains follow at residues 92–136 (FEGP…FCTE) and 137–183 (RDEP…WKYC). Intrachain disulfides connect Cys-97–Cys-121, Cys-111–Cys-134, Cys-142–Cys-168, and Cys-156–Cys-183.

Belongs to the seminal plasma protein family.

The protein resides in the secreted. Binds to spermatozoa upon ejaculation and may play a role in sperm capacitation. Displays heparin-, gelatin- and phospholipid-binding activities. The protein is Seminal plasma protein BSP-30 kDa of Bos taurus (Bovine).